A 225-amino-acid chain; its full sequence is UPF0758 protein BcerKBAB4_4299 (225 aa).

The 123-residue stretch at 103–225 folds into the MPN domain; it reads SIRSPEDCAS…FVSLKEKGHI (123 aa). His-174, His-176, and Asp-187 together coordinate Zn(2+). The JAMM motif motif lies at 174–187; it reads HNHPSGDPAPSRED.

It belongs to the UPF0758 family.

This is UPF0758 protein BcerKBAB4_4299 from Bacillus mycoides (strain KBAB4) (Bacillus weihenstephanensis).